A 599-amino-acid polypeptide reads, in one-letter code: Leucine zipper putative tumor suppressor 1 (599 aa).

G2 carries the N-myristoyl glycine lipid modification. Disordered regions lie at residues 135 to 190 (GAIL…TTSS) and 288 to 324 (EFAS…KSQR). Basic and acidic residues predominate over residues 153-162 (PPDKPKEQEL). Over residues 174–190 (SGRNSMSSLPTHSTTSS) the composition is skewed to polar residues. A coiled-coil region spans residues 256–572 (LSTDECTIQE…LEKALQQLAR (317 aa)). Residues 288–313 (EFASGQTFEERPRRTRDELECLEPKS) are compositionally biased toward basic and acidic residues.

Belongs to the LZTS family. In terms of assembly, binds EEF1G, TLK2 and CDK1. Post-translationally, phosphorylated on serine residues. Hyperphosphorylated by the cAMP-dependent kinase PKA during cell-cycle progression.

The protein resides in the cytoplasm. The protein localises to the cell membrane. It localises to the cell projection. It is found in the dendritic spine. Its subcellular location is the postsynaptic density. The protein resides in the synapse. Functionally, involved in the regulation of cell growth. May stabilize the active CDC2-cyclin B1 complex and thereby contribute to the regulation of the cell cycle and the prevention of uncontrolled cell proliferation. May act as tumor suppressor. The sequence is that of Leucine zipper putative tumor suppressor 1 (Lzts1) from Mus musculus (Mouse).